A 480-amino-acid chain; its full sequence is Glutamyl-tRNA(Gln) amidotransferase subunit A (480 aa).

Residues K79 and S154 each act as charge relay system in the active site. Positions 133–156 (NENSAYGPVRNPRDKSRVPGGSSG) are disordered. S178 serves as the catalytic Acyl-ester intermediate.

This sequence belongs to the amidase family. GatA subfamily. In terms of assembly, heterotrimer of A, B and C subunits.

The enzyme catalyses L-glutamyl-tRNA(Gln) + L-glutamine + ATP + H2O = L-glutaminyl-tRNA(Gln) + L-glutamate + ADP + phosphate + H(+). Its function is as follows. Allows the formation of correctly charged Gln-tRNA(Gln) through the transamidation of misacylated Glu-tRNA(Gln) in organisms which lack glutaminyl-tRNA synthetase. The reaction takes place in the presence of glutamine and ATP through an activated gamma-phospho-Glu-tRNA(Gln). The polypeptide is Glutamyl-tRNA(Gln) amidotransferase subunit A (Koribacter versatilis (strain Ellin345)).